We begin with the raw amino-acid sequence, 207 residues long: Pyrrolidone-carboxylate peptidase (207 aa).

Catalysis depends on residues E80, C143, and H167.

The protein belongs to the peptidase C15 family. Homotetramer.

The protein resides in the cytoplasm. The enzyme catalyses Release of an N-terminal pyroglutamyl group from a polypeptide, the second amino acid generally not being Pro.. Functionally, removes 5-oxoproline from various penultimate amino acid residues except L-proline. The chain is Pyrrolidone-carboxylate peptidase from Coprothermobacter proteolyticus (strain ATCC 35245 / DSM 5265 / OCM 4 / BT).